The sequence spans 83 residues: U5-theraphotoxin-Hs1a 1 (83 aa).

The first 21 residues, 1-21 (MKTSMFLTLTGLGLLFVVCYA), serve as a signal peptide directing secretion. Residues 22–49 (SESEEKEFPKELLSSIFAADSDFKVEER) constitute a propeptide that is removed on maturation. 3 cysteine pairs are disulfide-bonded: Cys51–Cys63, Cys56–Cys68, and Cys62–Cys75.

It belongs to the neurotoxin 10 (Hwtx-1) family. 51 (Hntx-8) subfamily. Hntx-8 sub-subfamily. In terms of tissue distribution, expressed by the venom gland.

The protein resides in the secreted. Functionally, agglutinates human and mice erythrocytes. This activity can be specifically inhibited by mannosamine. This lectin shows very low toxicity in both mammals and insects. The sequence is that of U5-theraphotoxin-Hs1a 1 from Cyriopagopus schmidti (Chinese bird spider).